Here is a 481-residue protein sequence, read N- to C-terminus: tRNA sulfurtransferase (481 aa).

The THUMP domain occupies 54 to 156 (ADGDGPLRHI…GKDVFFYHEI (103 aa)). ATP is bound by residues 174–175 (LV), Lys256, Gly278, and Gln287. Cys334 and Cys433 are joined by a disulfide. Residues 388-463 (IPKDAVIIDL…YYSTFSDLKK (76 aa)) form the Rhodanese domain. The Cysteine persulfide intermediate role is filled by Cys433.

This sequence belongs to the ThiI family.

It localises to the cytoplasm. The catalysed reaction is [ThiI sulfur-carrier protein]-S-sulfanyl-L-cysteine + a uridine in tRNA + 2 reduced [2Fe-2S]-[ferredoxin] + ATP + H(+) = [ThiI sulfur-carrier protein]-L-cysteine + a 4-thiouridine in tRNA + 2 oxidized [2Fe-2S]-[ferredoxin] + AMP + diphosphate. It catalyses the reaction [ThiS sulfur-carrier protein]-C-terminal Gly-Gly-AMP + S-sulfanyl-L-cysteinyl-[cysteine desulfurase] + AH2 = [ThiS sulfur-carrier protein]-C-terminal-Gly-aminoethanethioate + L-cysteinyl-[cysteine desulfurase] + A + AMP + 2 H(+). It participates in cofactor biosynthesis; thiamine diphosphate biosynthesis. In terms of biological role, catalyzes the ATP-dependent transfer of a sulfur to tRNA to produce 4-thiouridine in position 8 of tRNAs, which functions as a near-UV photosensor. Also catalyzes the transfer of sulfur to the sulfur carrier protein ThiS, forming ThiS-thiocarboxylate. This is a step in the synthesis of thiazole, in the thiamine biosynthesis pathway. The sulfur is donated as persulfide by IscS. The protein is tRNA sulfurtransferase of Thermoplasma acidophilum (strain ATCC 25905 / DSM 1728 / JCM 9062 / NBRC 15155 / AMRC-C165).